The following is a 715-amino-acid chain: Epidermal growth factor receptor kinase substrate 8-like protein 2 (715 aa).

A PID domain is found at M46 to P202. A disordered region spans residues Q183 to E243. Over residues L199–I208 the composition is skewed to pro residues. Basic and acidic residues-rich tracts occupy residues R213–N222 and G234–E243. The residue at position 240 (S240) is a Phosphoserine. At T303 the chain carries Phosphothreonine. The interval V448 to Y487 is disordered. Position 449 is a phosphoserine (S449). Positions V451 to S466 are enriched in polar residues. T469 is subject to Phosphothreonine. The region spanning A492–P551 is the SH3 domain. Position 570 is a phosphoserine (S570).

Belongs to the EPS8 family. Interacts with ABI1. Part of a complex that contains SOS1, ABI1 and EPS8L2. Associates with F-actin. In terms of tissue distribution, detected in fibroblasts and placenta.

The protein resides in the cytoplasm. It localises to the cell projection. It is found in the stereocilium. Functionally, stimulates guanine exchange activity of SOS1. May play a role in membrane ruffling and remodeling of the actin cytoskeleton. In the cochlea, is required for stereocilia maintenance in adult hair cells. This chain is Epidermal growth factor receptor kinase substrate 8-like protein 2 (EPS8L2), found in Homo sapiens (Human).